Here is a 240-residue protein sequence, read N- to C-terminus: 2,3-bisphosphoglycerate-dependent phosphoglycerate mutase (240 aa).

Residues 5-12 (RHGESVWN), 18-19 (TG), Arg57, 84-87 (ERHY), Lys95, 111-112 (RR), and 180-181 (GN) each bind substrate. Catalysis depends on His6, which acts as the Tele-phosphohistidine intermediate. The Proton donor/acceptor role is filled by Glu84.

Belongs to the phosphoglycerate mutase family. BPG-dependent PGAM subfamily. As to quaternary structure, homodimer.

It catalyses the reaction (2R)-2-phosphoglycerate = (2R)-3-phosphoglycerate. It functions in the pathway carbohydrate degradation; glycolysis; pyruvate from D-glyceraldehyde 3-phosphate: step 3/5. Functionally, catalyzes the interconversion of 2-phosphoglycerate and 3-phosphoglycerate. In Nitrosococcus oceani (strain ATCC 19707 / BCRC 17464 / JCM 30415 / NCIMB 11848 / C-107), this protein is 2,3-bisphosphoglycerate-dependent phosphoglycerate mutase.